The chain runs to 577 residues: External alternative NAD(P)H-ubiquinone oxidoreductase B1, mitochondrial (577 aa).

The transit peptide at 1-35 (MRGFTYLSKVLHSHSSYSKLLVLCSVSTGGLLVYA) directs the protein to the mitochondrion. Residue 57-87 (RVVVLGTGWGGTSFLKDVDISSYDVQVVSPR) coordinates FAD. NAD(+) is bound at residue 221 to 257 (LHFVIVGGGPTGVEFAAELHDYVYEDLVKIYPSVKDF). The region spanning 378-413 (KVMEDISAIFKAADKDDSGTLSIEEFRDVLEDIIIR) is the EF-hand domain. The Ca(2+) site is built by Asp391, Asp393, Ser395, Thr397, and Glu402. The short motif at 568-577 (YIFGRDSSRI) is the Microbody targeting signal element.

It belongs to the NADH dehydrogenase family. FAD is required as a cofactor.

It localises to the mitochondrion inner membrane. The protein localises to the peroxisome. It carries out the reaction a quinone + NADH + H(+) = a quinol + NAD(+). The catalysed reaction is a ubiquinone + NADH + H(+) = a ubiquinol + NAD(+). With respect to regulation, activity is calcium-dependent with a more pronounced effect at higher pH. In terms of biological role, alternative NADH-ubiquinone oxidoreductase which catalyzes the oxidation of mitochondrial NADH does not translocate protons across the inner mitochondrial membrane. Calcium-dependent NAD(P)H dehydrogenase. Binds calcium ions. This chain is External alternative NAD(P)H-ubiquinone oxidoreductase B1, mitochondrial (NDB1), found in Solanum tuberosum (Potato).